Here is a 120-residue protein sequence, read N- to C-terminus: NAD(P)H-quinone oxidoreductase subunit 3, chloroplastic (120 aa).

A run of 3 helical transmembrane segments spans residues 10-30 (FWAF…TSSL), 64-84 (MFAL…PWAM), and 89-109 (LGVL…IGLV).

Belongs to the complex I subunit 3 family. NDH is composed of at least 16 different subunits, 5 of which are encoded in the nucleus.

Its subcellular location is the plastid. It localises to the chloroplast thylakoid membrane. It catalyses the reaction a plastoquinone + NADH + (n+1) H(+)(in) = a plastoquinol + NAD(+) + n H(+)(out). It carries out the reaction a plastoquinone + NADPH + (n+1) H(+)(in) = a plastoquinol + NADP(+) + n H(+)(out). Its function is as follows. NDH shuttles electrons from NAD(P)H:plastoquinone, via FMN and iron-sulfur (Fe-S) centers, to quinones in the photosynthetic chain and possibly in a chloroplast respiratory chain. The immediate electron acceptor for the enzyme in this species is believed to be plastoquinone. Couples the redox reaction to proton translocation, and thus conserves the redox energy in a proton gradient. This chain is NAD(P)H-quinone oxidoreductase subunit 3, chloroplastic, found in Zygnema circumcarinatum (Green alga).